The chain runs to 963 residues: SH3 domain-binding protein 4 (963 aa).

Residues 55 to 114 form the SH3 1 domain; it reads GNAKEVIAIKDYCPTNFTTLKFSKGDHLYVLDTSGGEWWYAHNTTEMGYIPSSYVQPLNY. A phosphoserine mark is found at S131, S246, S251, S279, and S296. The 138-residue stretch at 317–454 folds into the ZU5 domain; sequence TNIVCKLDSS…LEPCMYVAVV (138 aa). S637 carries the post-translational modification Phosphoserine. The region spanning 654–724 is the SH3 2 domain; that stretch reads SSLKFGKLLK…HTKNVLVVGR (71 aa).

Homodimer or homooligomer. Interacts with DNM2, EPS15, clathrin, the adapter protein complex 2/AP-2 and TFRC. Interacts with the Rag GTPases RRAGA, RRAGB, RRAGC and RRAGD; the interaction is most probably direct, preferentially occurs with their inactive GDP-bound form and is negatively regulated by amino acids. In terms of assembly, (Microbial infection) Interacts with molluscum contagiosum virus protein MC159L; this interaction is important for the suppression of autophagy. Post-translationally, phosphorylated upon EGF stimulation. Phosphorylation prevents interaction with DNM2. As to expression, expressed in all tissues tested with higher expression in pancreas. Expressed by retinal pigment epithelial cells (at protein level).

The protein localises to the membrane. It is found in the clathrin-coated pit. The protein resides in the cytoplasmic vesicle. Its subcellular location is the clathrin-coated vesicle. It localises to the nucleus. Functionally, may function in transferrin receptor internalization at the plasma membrane through a cargo-specific control of clathrin-mediated endocytosis. Alternatively, may act as a negative regulator of the amino acid-induced TOR signaling by inhibiting the formation of active Rag GTPase complexes. Preferentially binds inactive Rag GTPase complexes and prevents their interaction with the mTORC1 complex inhibiting its relocalization to lysosomes and its activation. Thereby, may indirectly regulate cell growth, proliferation and autophagy. This Homo sapiens (Human) protein is SH3 domain-binding protein 4 (SH3BP4).